The following is a 432-amino-acid chain: Glutamate-1-semialdehyde 2,1-aminomutase (432 aa).

N6-(pyridoxal phosphate)lysine is present on Lys-265.

The protein belongs to the class-III pyridoxal-phosphate-dependent aminotransferase family. HemL subfamily. Homodimer. Pyridoxal 5'-phosphate is required as a cofactor.

It localises to the cytoplasm. It catalyses the reaction (S)-4-amino-5-oxopentanoate = 5-aminolevulinate. It participates in porphyrin-containing compound metabolism; protoporphyrin-IX biosynthesis; 5-aminolevulinate from L-glutamyl-tRNA(Glu): step 2/2. This is Glutamate-1-semialdehyde 2,1-aminomutase from Histophilus somni (strain 2336) (Haemophilus somnus).